The following is a 401-amino-acid chain: Putative TRAP transporter large permease protein HI_0050 (401 aa).

A run of 11 helical transmembrane segments spans residues 31-51, 70-90, 115-135, 144-164, 193-213, 217-237, 253-273, 290-310, 330-350, 353-373, and 375-395; these read FPLM…HGGI, LGYV…SAVA, GLIC…PMII, ITKL…GLWV, AFWP…GIFT, AGVV…GLTF, MVMF…VAQI, ILMF…DLIP, IAYF…TPPV, VLYV…KGIA, and FLFV…IVIV.

Belongs to the TRAP transporter large permease family.

Its subcellular location is the cell inner membrane. The polypeptide is Putative TRAP transporter large permease protein HI_0050 (Haemophilus influenzae (strain ATCC 51907 / DSM 11121 / KW20 / Rd)).